A 199-amino-acid chain; its full sequence is Protein GrpE (199 aa).

Polar residues predominate over residues 1-17 (MSDSDNNTKSQQNNPTQ). The tract at residues 1–36 (MSDSDNNTKSQQNNPTQTDEKSGEEIQSNQKPQRKF) is disordered.

Belongs to the GrpE family. As to quaternary structure, homodimer.

It is found in the cytoplasm. Functionally, participates actively in the response to hyperosmotic and heat shock by preventing the aggregation of stress-denatured proteins, in association with DnaK and GrpE. It is the nucleotide exchange factor for DnaK and may function as a thermosensor. Unfolded proteins bind initially to DnaJ; upon interaction with the DnaJ-bound protein, DnaK hydrolyzes its bound ATP, resulting in the formation of a stable complex. GrpE releases ADP from DnaK; ATP binding to DnaK triggers the release of the substrate protein, thus completing the reaction cycle. Several rounds of ATP-dependent interactions between DnaJ, DnaK and GrpE are required for fully efficient folding. This is Protein GrpE from Ehrlichia canis (strain Jake).